We begin with the raw amino-acid sequence, 84 residues long: Sulfur carrier protein TusA (84 aa).

C19 acts as the Cysteine persulfide intermediate in catalysis.

Belongs to the sulfur carrier protein TusA family. Interacts with IscS.

Its subcellular location is the cytoplasm. It participates in tRNA modification. Sulfur carrier protein involved in sulfur trafficking in the cell. Part of a sulfur-relay system required for 2-thiolation during synthesis of 2-thiouridine of the modified wobble base 5-methylaminomethyl-2-thiouridine (mnm(5)s(2)U) in tRNA. Interacts with IscS and stimulates its cysteine desulfurase activity. Accepts an activated sulfur from IscS, which is then transferred to TusD, and thus determines the direction of sulfur flow from IscS to 2-thiouridine formation. Also appears to be involved in sulfur transfer for the biosynthesis of molybdopterin. This chain is Sulfur carrier protein TusA, found in Yersinia enterocolitica serotype O:8 / biotype 1B (strain NCTC 13174 / 8081).